Consider the following 148-residue polypeptide: Large ribosomal subunit protein bL9 (148 aa).

This sequence belongs to the bacterial ribosomal protein bL9 family.

Its function is as follows. Binds to the 23S rRNA. The sequence is that of Large ribosomal subunit protein bL9 from Lachnoclostridium phytofermentans (strain ATCC 700394 / DSM 18823 / ISDg) (Clostridium phytofermentans).